A 266-amino-acid polypeptide reads, in one-letter code: Vitamin B12-binding protein (266 aa).

Positions 1–22 (MAKSLFRALVALSFLAPLWLNA) are cleaved as a signal peptide. The Fe/B12 periplasmic-binding domain maps to 25 to 266 (RVITLSPANT…QLCNALSQVD (242 aa)). Cyanocob(III)alamin-binding positions include tyrosine 50 and 242-246 (DWFER). Residues cysteine 183 and cysteine 259 are joined by a disulfide bond.

It belongs to the BtuF family. As to quaternary structure, the complex is composed of two ATP-binding proteins (BtuD), two transmembrane proteins (BtuC) and a solute-binding protein (BtuF).

The protein localises to the periplasm. Functionally, part of the ABC transporter complex BtuCDF involved in vitamin B12 import. Binds vitamin B12 and delivers it to the periplasmic surface of BtuC. The chain is Vitamin B12-binding protein (btuF) from Escherichia coli (strain K12).